The chain runs to 86 residues: Weak toxin 3 (86 aa).

A signal peptide spans methionine 1–threonine 23. Cystine bridges form between cysteine 24–cysteine 45, cysteine 27–cysteine 32, cysteine 38–cysteine 63, cysteine 67–cysteine 78, and cysteine 79–cysteine 84.

Belongs to the three-finger toxin family. Ancestral subfamily. Orphan group II sub-subfamily. Expressed by the venom gland.

It is found in the secreted. Functionally, binds with low affinity to muscular (alpha-1-beta-1-delta-epsilon/CHRNA1-CHRNB1-CHRND-CHRNE) and very low affinity to neuronal (alpha-7/CHRNA7) nicotinic acetylcholine receptor (nAChR). The chain is Weak toxin 3 from Bungarus candidus (Malayan krait).